Consider the following 1165-residue polypeptide: Error-prone DNA polymerase (1165 aa).

The tract at residues 1111–1165 (SEGLARPPLPTGADLYEPLTYEPLNGDRRDNPDAPAQRLRHPRDVRILPPSRDFH) is disordered. The segment covering 1152-1165 (PRDVRILPPSRDFH) has biased composition (basic and acidic residues).

It belongs to the DNA polymerase type-C family. DnaE2 subfamily.

Its subcellular location is the cytoplasm. The catalysed reaction is DNA(n) + a 2'-deoxyribonucleoside 5'-triphosphate = DNA(n+1) + diphosphate. DNA polymerase involved in damage-induced mutagenesis and translesion synthesis (TLS). It is not the major replicative DNA polymerase. The chain is Error-prone DNA polymerase from Rhodopseudomonas palustris (strain HaA2).